The primary structure comprises 107 residues: Phosphoribosyl-ATP pyrophosphatase (107 aa).

Belongs to the PRA-PH family.

The protein localises to the cytoplasm. The catalysed reaction is 1-(5-phospho-beta-D-ribosyl)-ATP + H2O = 1-(5-phospho-beta-D-ribosyl)-5'-AMP + diphosphate + H(+). It functions in the pathway amino-acid biosynthesis; L-histidine biosynthesis; L-histidine from 5-phospho-alpha-D-ribose 1-diphosphate: step 2/9. This Bacillus cereus (strain AH187) protein is Phosphoribosyl-ATP pyrophosphatase.